The primary structure comprises 194 residues: GIDENVCTMKLRENIKSPQEADFYNPKAGRITTANSQKLPALRSLQMSAERGFLYSNGIYAPHWNINAHSALYVTRGNAKVQVVGDEGNKVFDDEVKQGQLIIVPQYFAVIKKAGNQGFEYVAFKTNDNAMINPLVGRLSAFRAIPEEVLRSSFQISSEEAEELKYGRQEALLLSEQSQQGKREVADEKERERF.

In terms of domain architecture, Cupin type-1 spans 13-162 (ENIKSPQEAD…SFQISSEEAE (150 aa)).

This sequence belongs to the 11S seed storage protein (globulins) family. As to quaternary structure, hexamer; each subunit is composed of an acidic and a basic chain derived from a single precursor and linked by a disulfide bond. As to expression, cotyledons and endosperm protein bodies.

Functionally, seed storage protein with a relatively high level of Lys and Met. The protein is 13S globulin basic chain of Fagopyrum esculentum (Common buckwheat).